We begin with the raw amino-acid sequence, 185 residues long: Neuronal vesicle trafficking-associated protein 1 (185 aa).

The Cytoplasmic portion of the chain corresponds to 1–82 (MVKLGNNFAE…ITEGVTERFK (82 aa)). A helical; Signal-anchor for type II membrane protein membrane pass occupies residues 83–103 (VSVLVLFALAFLTCVVFLVVY). The Lumenal segment spans residues 104-185 (KVYKYDRACP…QETEAAEKSA (82 aa)). The tract at residues 129-164 (ESYYTEQDSSAREKFYTVINHYNVAKQSITRSVSPW) is required for GRIP1 interaction.

This sequence belongs to the NSG family. As to quaternary structure, forms a complex with GRIP1, GRIA2 and STX12 through direct interaction with GRIP1; controls the intracellular fate of AMPAR and the endosomal sorting of the GRIA2 subunit toward recycling and membrane targeting. Interacts with STX12. Interacts with APP; could regulate APP processing. Interacts with FAM171A1. Pituitary and less in adrenal gland and testis. Expressed in the hippocampus throughout development. At P0, highly and broadly expressed throughout the cortical plate, but is down-regulated overall at P8 and P14, but remains relatively enriched in layer V. At P0 is expressed ubiquitously in the developing cerebellum namely Purkinje neurons as well as granule neurons. However, it becomes restricted to Purkinje cells by P8. This exclusive expression in Purkinje cells is maintained throughout adulthood.

It is found in the membrane. The protein localises to the golgi apparatus. The protein resides in the trans-Golgi network membrane. Its subcellular location is the endosome membrane. It localises to the cell projection. It is found in the dendrite. The protein localises to the early endosome membrane. The protein resides in the late endosome membrane. Its subcellular location is the lysosome lumen. It localises to the recycling endosome membrane. It is found in the cytoplasmic vesicle membrane. The protein localises to the golgi stack membrane. The protein resides in the endosome. Its subcellular location is the multivesicular body membrane. It localises to the endoplasmic reticulum membrane. In terms of biological role, plays a role in the recycling mechanism in neurons of multiple receptors, including AMPAR, APP and L1CAM and acts at the level of early endosomes to promote sorting of receptors toward a recycling pathway. Regulates sorting and recycling of GRIA2 through interaction with GRIP1 and then contributes to the regulation of synaptic transmission and plasticity by affecting the recycling and targeting of AMPA receptors to the synapse. Is required for faithful sorting of L1CAM to axons by facilitating trafficking from somatodendritic early endosome or the recycling endosome. In an other hand, induces apoptosis via the activation of CASP3 in response to DNA damage. This Mus musculus (Mouse) protein is Neuronal vesicle trafficking-associated protein 1.